The primary structure comprises 300 residues: Diphthine methyl ester synthase (300 aa).

Residues Leu9, Asp85, Gly88, 113–114 (SV), Leu164, Leu222, and His247 each bind S-adenosyl-L-methionine.

The protein belongs to the diphthine synthase family.

It localises to the cytoplasm. It catalyses the reaction 2-[(3S)-amino-3-carboxypropyl]-L-histidyl-[translation elongation factor 2] + 4 S-adenosyl-L-methionine = diphthine methyl ester-[translation elongation factor 2] + 4 S-adenosyl-L-homocysteine + 3 H(+). It functions in the pathway protein modification; peptidyl-diphthamide biosynthesis. Its function is as follows. S-adenosyl-L-methionine-dependent methyltransferase that catalyzes four methylations of the modified target histidine residue in translation elongation factor 2 (EF-2), to form an intermediate called diphthine methyl ester. The four successive methylation reactions represent the second step of diphthamide biosynthesis. This Yarrowia lipolytica (strain CLIB 122 / E 150) (Yeast) protein is Diphthine methyl ester synthase (DPH5).